Reading from the N-terminus, the 135-residue chain is Protein PsiE homolog (135 aa).

4 consecutive transmembrane segments (helical) span residues 14–34 (LQTILNIGLLALATILVIFLV), 54–74 (YQLIEGIVIYFLYFEFIALIV), 82–102 (HFPLRYFIYIGITAIIRLIIV), and 107–127 (PSDTLVYSAAILLLVVTLYLA).

This sequence belongs to the PsiE family.

The protein resides in the cell inner membrane. The polypeptide is Protein PsiE homolog (Pectobacterium atrosepticum (strain SCRI 1043 / ATCC BAA-672) (Erwinia carotovora subsp. atroseptica)).